Here is a 295-residue protein sequence, read N- to C-terminus: 33 kDa chaperonin (295 aa).

Disulfide bonds link cysteine 236/cysteine 238 and cysteine 269/cysteine 272.

It belongs to the HSP33 family. Post-translationally, under oxidizing conditions two disulfide bonds are formed involving the reactive cysteines. Under reducing conditions zinc is bound to the reactive cysteines and the protein is inactive.

It localises to the cytoplasm. In terms of biological role, redox regulated molecular chaperone. Protects both thermally unfolding and oxidatively damaged proteins from irreversible aggregation. Plays an important role in the bacterial defense system toward oxidative stress. The polypeptide is 33 kDa chaperonin (Citrifermentans bemidjiense (strain ATCC BAA-1014 / DSM 16622 / JCM 12645 / Bem) (Geobacter bemidjiensis)).